Consider the following 673-residue polypeptide: DNA ligase (673 aa).

NAD(+) is bound by residues 32-36 (DHVYD), 81-82 (SL), and Glu111. Residue Lys113 is the N6-AMP-lysine intermediate of the active site. 4 residues coordinate NAD(+): Arg134, Glu171, Lys286, and Lys310. Zn(2+) contacts are provided by Cys404, Cys407, Cys422, and Cys428. Residues 595 to 673 (NIIDEYKNKT…NEFWKKDNNF (79 aa)) form the BRCT domain.

This sequence belongs to the NAD-dependent DNA ligase family. LigA subfamily. Mg(2+) serves as cofactor. The cofactor is Mn(2+).

The enzyme catalyses NAD(+) + (deoxyribonucleotide)n-3'-hydroxyl + 5'-phospho-(deoxyribonucleotide)m = (deoxyribonucleotide)n+m + AMP + beta-nicotinamide D-nucleotide.. Functionally, DNA ligase that catalyzes the formation of phosphodiester linkages between 5'-phosphoryl and 3'-hydroxyl groups in double-stranded DNA using NAD as a coenzyme and as the energy source for the reaction. It is essential for DNA replication and repair of damaged DNA. This chain is DNA ligase, found in Ureaplasma urealyticum serovar 10 (strain ATCC 33699 / Western).